The primary structure comprises 506 residues: F-box protein At4g02760 (506 aa).

Residues 115–161 (TSWPLLPELTIKVFSMLDTKSLMQASACCTMFNKCAMDRVCYSHIDL) form the F-box domain. The segment at 452–506 (TFVAEFRSPSPSESDVRSPSPSSSSDSSSSSDSSSSSSSGESSDESGTEEEEDED) is disordered. A compositionally biased stretch (low complexity) spans 459-492 (SPSPSESDVRSPSPSSSSDSSSSSDSSSSSSSGE). Over residues 493-506 (SSDESGTEEEEDED) the composition is skewed to acidic residues.

The sequence is that of F-box protein At4g02760 from Arabidopsis thaliana (Mouse-ear cress).